Reading from the N-terminus, the 480-residue chain is uncharacterized protein (480 aa).

Positions 1–20 (MDVKDTGINRSDTPISDQDH) are disordered.

This is an uncharacterized protein from Arabidopsis thaliana (Mouse-ear cress).